Consider the following 161-residue polypeptide: Phosphohistidine phosphatase SixA (161 aa).

Belongs to the SixA phosphatase family.

Functionally, exhibits phosphohistidine phosphatase activity towards the HPt domain of the ArcB sensor involved in the multistep His-Asp phosphorelay. The polypeptide is Phosphohistidine phosphatase SixA (sixA) (Escherichia coli (strain K12)).